The sequence spans 1214 residues: RNA-directed RNA polymerase VP1 (1214 aa).

In terms of domain architecture, RdRp catalytic spans 610-805 (APHDVMAPQL…KRTIVGNNVA (196 aa)).

Belongs to the reoviridae RNA-directed RNA polymerase family.

It localises to the virion. The enzyme catalyses RNA(n) + a ribonucleoside 5'-triphosphate = RNA(n+1) + diphosphate. Its function is as follows. RNA-directed RNA polymerase that is involved in transcription and genome replication. Following infection, it catalyzes the synthesis of fully conservative plus strands. After core assembly, which consists in recruitment of one capped plus-strand for each genomic segments and polymerase complexes, the polymerase switches mode and catalyzes the synthesis of complementary minus-strands. This chain is RNA-directed RNA polymerase VP1 (Segment-1), found in Banna virus (BAV).